A 256-amino-acid polypeptide reads, in one-letter code: Trans-aconitate 2-methyltransferase (256 aa).

It belongs to the methyltransferase superfamily. Tam family.

It is found in the cytoplasm. It carries out the reaction trans-aconitate + S-adenosyl-L-methionine = (E)-3-(methoxycarbonyl)pent-2-enedioate + S-adenosyl-L-homocysteine. Its function is as follows. Catalyzes the S-adenosylmethionine monomethyl esterification of trans-aconitate. The protein is Trans-aconitate 2-methyltransferase of Rhodopseudomonas palustris (strain HaA2).